The primary structure comprises 72 residues: PI-stichotoxin-Hcr2j (72 aa).

The N-terminal stretch at 1–9 (GFYFRSIQG) is a signal peptide. Residues 10 to 17 (FYFKRIQG) constitute a propeptide that is removed on maturation. The BPTI/Kunitz inhibitor domain maps to 20–70 (CSEPKKVGRCRESFPRFYFDSETGKCTPFIYGGCGGNGNNFETLHACRAIC). Disulfide bonds link cysteine 20-cysteine 70, cysteine 29-cysteine 53, and cysteine 45-cysteine 66.

The protein belongs to the venom Kunitz-type family. Sea anemone type 2 potassium channel toxin subfamily.

Its subcellular location is the secreted. The protein resides in the nematocyst. In terms of biological role, serine protease inhibitor that acts on trypsin (Ki=190 nM) and to elastase. Does not bind to alpha-chymotrypsin, cathepsin G, and kallikrein. It significantly increases neuroblastoma cell viability in an in vitro neurotoxicity model, being a consequence of an effective decrease of reactive oxygen species (ROS) level in the cells. It also protects cells by inhibiting ATP-induced purinoceptor activation. Its binding affinity to P2RX7 is moderate (Kd=45.5 uM). The chain is PI-stichotoxin-Hcr2j from Radianthus crispa (Leathery sea anemone).